The following is a 196-amino-acid chain: Aequorin-1 (196 aa).

Residues 1–7 (MTSEQYS) constitute a propeptide that is removed on maturation. 4 consecutive EF-hand domains span residues 18 to 53 (KWIG…IVIN), 54 to 108 (NLGA…SKNQ), 111 to 146 (LIRL…DGII), and 147 to 182 (QSSE…FWYT). Positions 31, 33, 35, 37, and 42 each coordinate Ca(2+). 3 may interact with the chromophore regions span residues 47 to 57 (ASDIVINNLGA), 62 to 72 (AKRHKDAVEAF), and 107 to 117 (NQITLIRLWGD). Residues D124, D126, N128, E135, D160, D162, S164, Q166, and E171 each coordinate Ca(2+).

Belongs to the aequorin family. In terms of processing, the reduction of the disulfide bond is necessary to regenerate aequorin from apoaequorin.

In terms of biological role, ca(2+)-dependent bioluminescence photoprotein. Displays an emission peak at 470 nm (blue light). Trace amounts of calcium ion trigger the intramolecular oxidation of the chromophore, coelenterazine into coelenteramide and CO(2) with the concomitant emission of light. This Aequorea victoria (Water jellyfish) protein is Aequorin-1.